We begin with the raw amino-acid sequence, 397 residues long: GDP-mannose transporter 1 (397 aa).

A disordered region spans residues 1–57 (MSKPFVPTPNISRPATPSSLDYGKDEASSTLLRDMGERGDRERKDREERDKKEAMPS). Residues 1–61 (MSKPFVPTPN…KEAMPSGQDQ (61 aa)) are Cytoplasmic-facing. Positions 9–19 (PNISRPATPSS) are enriched in polar residues. A compositionally biased stretch (basic and acidic residues) spans 34–54 (DMGERGDRERKDREERDKKEA). The chain crosses the membrane as a helical span at residues 62 to 82 (VLPILSYCAASIMMTVVNKYV). Residues 83 to 87 (VSGAN) are Lumenal-facing. Asn-87 carries N-linked (GlcNAc...) asparagine glycosylation. Residues 88-108 (FTMTFLLLAIQSSVCVLAVTT) traverse the membrane as a helical segment. The Cytoplasmic portion of the chain corresponds to 109-124 (VKKLGFISFRDFDKND). A helical membrane pass occupies residues 125-142 (AKAWWPISTLLVAVIYTG). The Lumenal portion of the chain corresponds to 143–145 (SKA). The chain crosses the membrane as a helical span at residues 146 to 168 (LQFLSIPVYTIFKNLTIILIAYG). The Cytoplasmic segment spans residues 169–174 (EVFMFN). A helical membrane pass occupies residues 175–197 (GAVSGLTLCSFALMVGSSIIAAW). Over 198-228 (SDITSVWNKEPELDPITGLEITVGPVSTIGG) the chain is Lumenal. A helical membrane pass occupies residues 229–249 (LNAGYIWMALNCFVSAAYVLF). Residues 250-272 (MRKRIKVTGFKDWDSMYYNNLLS) lie on the Cytoplasmic side of the membrane. Residues 273 to 293 (IPILVVFSLVIEDWGSESLAL) form a helical membrane-spanning segment. Residues 294–300 (NFPASNR) are Lumenal-facing. The helical transmembrane segment at 301 to 321 (VLLLSAMAFSGAAAVFISYST) threads the bilayer. Residues 322–332 (AWCVRITGSTT) are Cytoplasmic-facing. Residues 333-353 (YSMVGALNKLPVAASGILFFG) form a helical membrane-spanning segment. Residues 354–355 (DP) are Lumenal-facing. A helical membrane pass occupies residues 356-376 (ANFGNISAIAVGGVAGVVYAV). Topologically, residues 377–397 (AKTNQAKVEKARQARAAGGRP) are cytoplasmic.

The protein belongs to the TPT transporter family. SLC35D subfamily. In terms of assembly, homooligomer.

It localises to the golgi apparatus membrane. The protein resides in the cytoplasmic vesicle membrane. The protein localises to the endoplasmic reticulum membrane. Involved in the import of GDP-mannose from the cytoplasm into the Golgi lumen. Involved in capsule synthesis. This chain is GDP-mannose transporter 1 (GMT1), found in Cryptococcus neoformans var. neoformans serotype D (strain B-3501A) (Filobasidiella neoformans).